A 241-amino-acid polypeptide reads, in one-letter code: Triosephosphate isomerase (241 aa).

Residue 9–11 (NWK) participates in substrate binding. Residue His-96 is the Electrophile of the active site. Glu-165 functions as the Proton acceptor in the catalytic mechanism. Substrate contacts are provided by residues Gly-171, Ser-204, and 225–226 (GG).

Belongs to the triosephosphate isomerase family. As to quaternary structure, homodimer.

Its subcellular location is the cytoplasm. It catalyses the reaction D-glyceraldehyde 3-phosphate = dihydroxyacetone phosphate. Its pathway is carbohydrate biosynthesis; gluconeogenesis. It functions in the pathway carbohydrate degradation; glycolysis; D-glyceraldehyde 3-phosphate from glycerone phosphate: step 1/1. Its function is as follows. Involved in the gluconeogenesis. Catalyzes stereospecifically the conversion of dihydroxyacetone phosphate (DHAP) to D-glyceraldehyde-3-phosphate (G3P). This is Triosephosphate isomerase from Gloeothece citriformis (strain PCC 7424) (Cyanothece sp. (strain PCC 7424)).